Consider the following 271-residue polypeptide: Beta-lactamase (271 aa).

Serine 46 serves as the catalytic Acyl-ester intermediate. 210–212 (KTG) serves as a coordination point for substrate.

The protein belongs to the class-A beta-lactamase family. As to quaternary structure, monomer.

The catalysed reaction is a beta-lactam + H2O = a substituted beta-amino acid. In terms of biological role, hydrolyzes broad-spectrum beta-lactam antibiotics. Active against cephalosporins. In Proteus vulgaris, this protein is Beta-lactamase.